The following is a 669-amino-acid chain: Probable L-type lectin-domain containing receptor kinase I.2 (669 aa).

The first 24 residues, 1–24 (MAQRFYLLLLLLIFLVNLICFSSQ), serve as a signal peptide directing secretion. Residues 25-295 (QDLSFVFNGF…FTEQKRKRSP (271 aa)) lie on the Extracellular side of the membrane. A legume-lectin like region spans residues 26–266 (DLSFVFNGFN…NQYILGWSFS (241 aa)). 4 N-linked (GlcNAc...) asparagine glycosylation sites follow: Asn-132, Asn-189, Asn-212, and Asn-233. The helical transmembrane segment at 296-316 (LLIVLLVILTLVVIGGLGGYY) threads the bilayer. At 317 to 669 (LYRRKKYAEV…SHTILNGDGR (353 aa)) the chain is on the cytoplasmic side. Residues 351 to 609 (FNKDGRLGKG…MQYINRDQAL (259 aa)) enclose the Protein kinase domain. Residues 357–365 (LGKGGFGEV) and Lys-379 each bind ATP. Asp-475 serves as the catalytic Proton acceptor.

It in the C-terminal section; belongs to the protein kinase superfamily. Ser/Thr protein kinase family. The protein in the N-terminal section; belongs to the leguminous lectin family.

Its subcellular location is the cell membrane. It catalyses the reaction L-seryl-[protein] + ATP = O-phospho-L-seryl-[protein] + ADP + H(+). The enzyme catalyses L-threonyl-[protein] + ATP = O-phospho-L-threonyl-[protein] + ADP + H(+). Involved in resistance response to the pathogenic fungus Alternaria brassicicola. This is Probable L-type lectin-domain containing receptor kinase I.2 from Arabidopsis thaliana (Mouse-ear cress).